Consider the following 87-residue polypeptide: Putative defensin-like protein 84 (87 aa).

The first 27 residues, 1-27 (MTTKMVSSHRLLTLMVFALLLIPMISG), serve as a signal peptide directing secretion. 4 cysteine pairs are disulfide-bonded: cysteine 32/cysteine 73, cysteine 36/cysteine 54, cysteine 42/cysteine 71, and cysteine 46/cysteine 72.

It belongs to the DEFL family.

It is found in the secreted. The polypeptide is Putative defensin-like protein 84 (Arabidopsis thaliana (Mouse-ear cress)).